A 203-amino-acid polypeptide reads, in one-letter code: V-type ATP synthase subunit D (203 aa).

Belongs to the V-ATPase D subunit family.

Produces ATP from ADP in the presence of a proton gradient across the membrane. This is V-type ATP synthase subunit D from Chlamydia trachomatis serovar L2 (strain ATCC VR-902B / DSM 19102 / 434/Bu).